Reading from the N-terminus, the 453-residue chain is Ribosomal protein uS12 methylthiotransferase RimO (453 aa).

One can recognise an MTTase N-terminal domain in the interval 6–116 (PTVGIVSLGC…VLTAVHEAIA (111 aa)). [4Fe-4S] cluster contacts are provided by C15, C51, C80, C148, C152, and C155. Residues 134–371 (LTPKHFAYLK…MQLQQQISAN (238 aa)) enclose the Radical SAM core domain. The 67-residue stretch at 374-440 (QAKIGKTIQV…EYDLWATPVG (67 aa)) folds into the TRAM domain.

The protein belongs to the methylthiotransferase family. RimO subfamily. It depends on [4Fe-4S] cluster as a cofactor.

It localises to the cytoplasm. It catalyses the reaction L-aspartate(89)-[ribosomal protein uS12]-hydrogen + (sulfur carrier)-SH + AH2 + 2 S-adenosyl-L-methionine = 3-methylsulfanyl-L-aspartate(89)-[ribosomal protein uS12]-hydrogen + (sulfur carrier)-H + 5'-deoxyadenosine + L-methionine + A + S-adenosyl-L-homocysteine + 2 H(+). In terms of biological role, catalyzes the methylthiolation of an aspartic acid residue of ribosomal protein uS12. This Hydrogenovibrio crunogenus (strain DSM 25203 / XCL-2) (Thiomicrospira crunogena) protein is Ribosomal protein uS12 methylthiotransferase RimO.